Here is a 106-residue protein sequence, read N- to C-terminus: Putative double-stranded DNA mimic protein VCM66_1163 (106 aa).

Belongs to the putative dsDNA mimic protein family.

Functionally, may act as a double-stranded DNA (dsDNA) mimic. Probably regulates the activity of a dsDNA-binding protein. The sequence is that of Putative double-stranded DNA mimic protein VCM66_1163 from Vibrio cholerae serotype O1 (strain M66-2).